The chain runs to 647 residues: Putative ferric-chelate reductase 1 homolog (647 aa).

Residues 10–30 (WLATLVTALLAVAIWPDPGQS) form a helical membrane-spanning segment. Positions 25–195 (PDPGQSLPQG…AAPPLPTQSP (171 aa)) constitute a Reelin domain. Residues N127 and N158 are each glycosylated (N-linked (GlcNAc...) asparagine). Positions 245–368 (TKSCTSITVV…GKYHLLVASG (124 aa)) constitute a DOMON domain. The Cytochrome b561 domain occupies 372–570 (KENSVGYHDI…HLIFSIGGMA (199 aa)). The chain crosses the membrane as a helical span at residues 408-428 (LHGAFMIAAWIGTTSLGIIFA). Positions 409 and 450 each coordinate heme b. 5 helical membrane passes run 452-472 (LLMV…WVEL), 480-500 (HSII…GALF), 515-535 (GHWL…FFSV), 548-568 (WILV…SIGG), and 616-636 (LLGV…LLVV). Heme b-binding residues include H480 and H516.

The protein belongs to the FRRS1 family. Heme b is required as a cofactor.

It is found in the membrane. Its function is as follows. Putative ferric-chelate reductases reduce Fe(3+) to Fe(2+) before its transport from the endosome to the cytoplasm. The protein is Putative ferric-chelate reductase 1 homolog of Drosophila melanogaster (Fruit fly).